Reading from the N-terminus, the 185-residue chain is Elongation factor P (185 aa).

It belongs to the elongation factor P family.

It is found in the cytoplasm. Its pathway is protein biosynthesis; polypeptide chain elongation. Functionally, involved in peptide bond synthesis. Stimulates efficient translation and peptide-bond synthesis on native or reconstituted 70S ribosomes in vitro. Probably functions indirectly by altering the affinity of the ribosome for aminoacyl-tRNA, thus increasing their reactivity as acceptors for peptidyl transferase. The sequence is that of Elongation factor P from Bacillus licheniformis (strain ATCC 14580 / DSM 13 / JCM 2505 / CCUG 7422 / NBRC 12200 / NCIMB 9375 / NCTC 10341 / NRRL NRS-1264 / Gibson 46).